A 341-amino-acid chain; its full sequence is L-threonine 3-dehydrogenase (341 aa).

Cys38 contributes to the Zn(2+) binding site. Catalysis depends on charge relay system residues Thr40 and His43. The Zn(2+) site is built by His63, Glu64, Cys93, Cys96, Cys99, and Cys107. Residues Ile175, Asp195, Arg200, 262 to 264 (LGI), and 286 to 287 (IY) each bind NAD(+).

The protein belongs to the zinc-containing alcohol dehydrogenase family. In terms of assembly, homotetramer. Zn(2+) serves as cofactor.

It localises to the cytoplasm. It carries out the reaction L-threonine + NAD(+) = (2S)-2-amino-3-oxobutanoate + NADH + H(+). It participates in amino-acid degradation; L-threonine degradation via oxydo-reductase pathway; glycine from L-threonine: step 1/2. Functionally, catalyzes the NAD(+)-dependent oxidation of L-threonine to 2-amino-3-ketobutyrate. This chain is L-threonine 3-dehydrogenase, found in Colwellia psychrerythraea (strain 34H / ATCC BAA-681) (Vibrio psychroerythus).